Consider the following 312-residue polypeptide: Probable deoxyhypusine synthase (312 aa).

Lysine 285 (nucleophile) is an active-site residue.

This sequence belongs to the deoxyhypusine synthase family. NAD(+) is required as a cofactor.

It catalyses the reaction [eIF5A protein]-L-lysine + spermidine = [eIF5A protein]-deoxyhypusine + propane-1,3-diamine. It functions in the pathway protein modification; eIF5A hypusination. In terms of biological role, catalyzes the NAD-dependent oxidative cleavage of spermidine and the subsequent transfer of the butylamine moiety of spermidine to the epsilon-amino group of a specific lysine residue of the eIF-5A precursor protein to form the intermediate deoxyhypusine residue. This Saccharolobus solfataricus (strain ATCC 35092 / DSM 1617 / JCM 11322 / P2) (Sulfolobus solfataricus) protein is Probable deoxyhypusine synthase (dys).